The sequence spans 197 residues: Putative RNA-binding protein EEED8.12 (197 aa).

An RRM domain is found at 61 to 138 (KSVFIGNVDF…RPIVVTAKRT (78 aa)). Residues 142 to 166 (GMGHGVRGSSRGTFGRGRGAARGAP) form a disordered region.

This is Putative RNA-binding protein EEED8.12 from Caenorhabditis elegans.